A 1410-amino-acid chain; its full sequence is Ribosome-binding protein 1 (1410 aa).

At 1–7 (MDIYDTQ) the chain is on the lumenal side. Residues 8 to 28 (TLGVVVFGGFMVVSAIGIFLV) traverse the membrane as a helical segment. At 29 to 1410 (STFSMKETSY…GSSSKEGTSV (1382 aa)) the chain is on the cytoplasmic side. 2 disordered regions span residues 44-90 (NQRK…DPAP) and 129-152 (QEKLASSPKDKKKKEKKVAKVEPA). A compositionally biased stretch (basic residues) spans 52–63 (THHQKVEKKKKE). A compositionally biased stretch (basic and acidic residues) spans 64–88 (KTVEKKGKTKKKEEKPNGKIPDHDP). K148 participates in a covalent cross-link: Glycyl lysine isopeptide (Lys-Gly) (interchain with G-Cter in SUMO2). Residues S159 and S165 each carry the phosphoserine modification. Disordered regions lie at residues 173 to 648 (APKE…PLYL) and 895 to 925 (QSSHASLRADAEKAQEQQQQMAELHSKLQSS). Composition is skewed to polar residues over residues 191–209 (TPATGTTQGKKAEGTQNQS) and 225–238 (TPNQGKKTEGTPNQ). Tandem repeats lie at residues 197–206 (TQGKKAEGTQ), 207–216 (NQSKKAEGAP), 217–226 (NQGRKAEGTP), 227–236 (NQGKKTEGTP), 237–246 (NQGKKAEGTP), 247–256 (NQGKKAEGTP), 257–266 (NQGKKAEGAQ), 267–276 (NQGKKVDTTP), 277–286 (NQGKKVEGAP), 287–296 (TQGRKAEGAQ), 297–306 (NQAKKVEGAQ), 307–316 (NQGKKAEGAQ), 317–326 (NQGKKGEGAQ), 327–336 (NQGKKAEGAQ), 337–346 (NQGKKAEGAQ), 347–356 (NQGKKAEGAQ), 357–366 (NQGKKAEGAQ), 367–376 (NQGKKAEGAQ), 377–386 (NQGKKAEGAQ), 387–396 (NQGKKVEGAQ), 397–406 (NQGKKAEGAQ), 407–416 (NQGKKAEGAQ), 417–426 (NQGKKAEGAQ), 427–436 (NQGKKAEGAQ), 437–446 (NQGKKAEGAQ), 447–456 (NQGKKAEGAQ), 457–466 (NQGKKAEGAQ), 467–476 (NQGKKVEGAQ), 477–486 (NQGKKAEGAQ), 487–496 (NQGKKAEGAQ), 497–506 (NQGKKAEGAQ), 507–516 (NQGQKGEGAQ), and 517–526 (NQGKKTEGAQ). The 41 X 10 AA approximate tandem repeats of [TN]-Q-[GSA]-[KRQT]-K-[ATGSV]-[ED]-[GTAS]-[ATIS]-[PQTAS] stretch occupies residues 197 to 604 (TQGKKAEGTQ…NQGKKTESAS (408 aa)). Phosphothreonine occurs at positions 225, 235, 245, and 255. Polar residues-rich tracts occupy residues 265 to 278 (AQNQGKKVDTTPNQ) and 295 to 519 (AQNQ…QNQG). Residues 520–532 (KKTEGAQGKKAER) show a composition bias toward basic and acidic residues. The stretch at 527–534 (GKKAERSP) is one 34; approximate repeat. At S533 the chain carries Phosphoserine. The stretch at 535-544 (NQGKKGEGAP) is repeat 35. Residues 545–554 (IQGKKADSVA) form a 36; approximate repeat. A compositionally biased stretch (polar residues) spans 553–567 (VANQGTKVEGITNQG). 2 consecutive repeat copies span residues 555–564 (NQGTKVEGIT) and 565–574 (NQGKKAEGSP). Over residues 568-581 (KKAEGSPSEGKKAE) the composition is skewed to basic and acidic residues. Phosphoserine occurs at positions 573 and 583. The 39; approximate repeat unit spans residues 575-584 (SEGKKAEGSP). A run of 2 repeats spans residues 585–594 (NQGKKADAAA) and 595–604 (NQGKKTESAS). A compositionally biased stretch (polar residues) spans 602-612 (SASVQGRNTDV). Residue S615 is modified to Phosphoserine. K620 is covalently cross-linked (Glycyl lysine isopeptide (Lys-Gly) (interchain with G-Cter in SUMO1)). A Phosphoserine modification is found at S900. An N6-acetyllysine modification is found at K932. Residues S959 and S978 each carry the phosphoserine modification. Disordered stretches follow at residues 1093 to 1122 (GPTLLKHPPAPAEPSSDLASKLREAEETQS), 1260 to 1287 (EMKSHVEDGDIAGAPASSPEAPPAEQDP), 1330 to 1362 (EKLRTAGPLESSETEEASQLKERLEKEKKLTSD), and 1378 to 1410 (QEQLAREKDTVKKLQEQLEKAEDGSSSKEGTSV). Residues S1276 and S1277 each carry the phosphoserine modification. 2 stretches are compositionally biased toward basic and acidic residues: residues 1347 to 1360 (SQLKERLEKEKKLT) and 1381 to 1403 (LAREKDTVKKLQEQLEKAEDGSS).

It is found in the endoplasmic reticulum membrane. Acts as a ribosome receptor and mediates interaction between the ribosome and the endoplasmic reticulum membrane. The sequence is that of Ribosome-binding protein 1 (RRBP1) from Homo sapiens (Human).